The primary structure comprises 65 residues: Putative per-hexamer repeat protein 2 (65 aa).

This is Putative per-hexamer repeat protein 2 (Phxr2) from Mus musculus (Mouse).